The following is a 193-amino-acid chain: Small ribosomal subunit protein eS1 (193 aa).

This sequence belongs to the eukaryotic ribosomal protein eS1 family.

The protein is Small ribosomal subunit protein eS1 of Sulfurisphaera tokodaii (strain DSM 16993 / JCM 10545 / NBRC 100140 / 7) (Sulfolobus tokodaii).